The following is a 305-amino-acid chain: Ribonucleoside-diphosphate reductase small subunit (305 aa).

Fe cation is bound by residues glutamate 64, glutamate 94, and histidine 97. Tyrosine 101 is an active-site residue. The chain crosses the membrane as a helical span at residues 150 to 170; that stretch reads VLVFLLIEGIFFISSFYSIAT. Glutamate 157, glutamate 191, and histidine 194 together coordinate Fe cation.

Belongs to the ribonucleoside diphosphate reductase small chain family. In terms of assembly, heterotetramer composed of a homodimer of the large subunit (R1) and a homodimer of the small subunit (R2). Larger multisubunit protein complex are also active, composed of (R1)n(R2)n. The cofactor is Fe cation.

It is found in the host membrane. The catalysed reaction is a 2'-deoxyribonucleoside 5'-diphosphate + [thioredoxin]-disulfide + H2O = a ribonucleoside 5'-diphosphate + [thioredoxin]-dithiol. In terms of biological role, ribonucleoside-diphosphate reductase holoenzyme provides the precursors necessary for viral DNA synthesis. Allows virus growth in non-dividing cells, as well as reactivation from latency in infected hosts. Catalyzes the biosynthesis of deoxyribonucleotides from the corresponding ribonucleotides. This chain is Ribonucleoside-diphosphate reductase small subunit, found in Equus caballus (Horse).